The primary structure comprises 221 residues: Mitochondrial cardiolipin hydrolase (221 aa).

The Mitochondrial intermembrane segment spans residues 1–4 (MGRS). Residues 1 to 38 (MGRSSWRLVFAAGAGLALALEALPWLMRWLLAGRRPRR) form a required for mitochondrial localization region. The helical transmembrane segment at 5–27 (SWRLVFAAGAGLALALEALPWLM) threads the bilayer. Over 28 to 221 (RWLLAGRRPR…SFFPQKHRGH (194 aa)) the chain is Cytoplasmic. The C3H1-type; atypical zinc finger occupies 44 to 75 (PSQVTCTEALLQAPGLPPGPSGCPCSLPHSES). The region spanning 148 to 175 (DLGYMHHKFAIVDKKVLITGSLNWTTQA) is the PLD phosphodiesterase domain. Residues H153, K155, and D160 contribute to the active site.

Belongs to the phospholipase D family. MitoPLD/Zucchini subfamily. As to quaternary structure, homodimer. Interacts with MOV10L1. Interacts with MIGA1 and MIGA2; possibly facilitating homodimer formation. Interacts with GK2. Predominantly expressed in testis (at protein level) and in growing ovary. Also expressed in the brain, eye and urinary bladder (at protein level), but its levels were low or undetectable in other organs.

It localises to the mitochondrion outer membrane. Its subcellular location is the nucleus membrane. It is found in the cell membrane. The protein resides in the golgi apparatus. The catalysed reaction is a cardiolipin + H2O = a 1,2-diacyl-sn-glycero-3-phospho-(1'-sn-glycerol) + a 1,2-diacyl-sn-glycero-3-phosphate + H(+). Its activity is regulated as follows. Single stranded DNA (ssDNA) hydrolase activity does not depend upon, but is stimulated by the presence of Ca(2+) and Mn(2+). MIGA1 and MIGA2 increase PLD6 self-association affinity and affects the homodimer conformation facilitating its phospholipase activity over the nuclease activity. MYC induces its expression and stimulates its phospholipase activity. In terms of biological role, presents phospholipase and nuclease activities, depending on the different physiological conditions. Interaction with Mitoguardin (MIGA1 or MIGA2) affects the dimer conformation, facilitating the lipase activity over the nuclease activity. Plays a key role in mitochondrial fusion and fission via its phospholipase activity. In its phospholipase role, it uses the mitochondrial lipid cardiolipin as substrate to generate phosphatidate (PA or 1,2-diacyl-sn-glycero-3-phosphate), a second messenger signaling lipid. Production of PA facilitates Mitofusin-mediated fusion, whereas the cleavage of PA by the Lipin family of phosphatases produces diacylgycerol (DAG) which promotes mitochondrial fission. Both Lipin and DAG regulate mitochondrial dynamics and membrane fusion/fission, important processes for adapting mitochondrial metabolism to changes in cell physiology. Mitochondrial fusion enables cells to cope with the increased nucleotide demand during DNA synthesis. Mitochondrial function and dynamics are closely associated with biological processes such as cell growth, proliferation, and differentiation. Mediator of MYC activity, promotes mitochondrial fusion and activates AMPK which in turn inhibits YAP/TAZ, thereby inducing cell growth and proliferation. The endonuclease activity plays a critical role in PIWI-interacting RNA (piRNA) biogenesis during spermatogenesis. Implicated in spermatogenesis and sperm fertility in testicular germ cells, its single strand-specific nuclease activity is critical for the biogenesis/maturation of PIWI-interacting RNA (piRNA). MOV10L1 selectively binds to piRNA precursors and funnels them to the endonuclease that catalyzes the first cleavage step of piRNA processing to generate piRNA intermediate fragments that are subsequently loaded to Piwi proteins. Cleaves either DNA or RNA substrates with similar affinity, producing a 5' phosphate end, in this way it participates in the processing of primary piRNA transcripts. piRNAs provide essential protection against the activity of mobile genetic elements. piRNA-mediated transposon silencing is thus critical for maintaining genome stability, in particular in germline cells when transposons are mobilized as a consequence of wide-spread genomic demethylation. PA may act as signaling molecule in the recognition/transport of the precursor RNAs of primary piRNAs. Interacts with tesmin in testes, suggesting a role in spermatogenesis via association with its interacting partner. This chain is Mitochondrial cardiolipin hydrolase (Pld6), found in Mus musculus (Mouse).